The primary structure comprises 423 residues: Pleckstrin homology domain-containing family O member 1 (423 aa).

Disordered stretches follow at residues Met1 to Pro21, Arg81 to Arg100, and Leu217 to Lys277. Positions Ala7–Gln20 are enriched in polar residues. The PH domain occupies Gln20 to Thr131. The segment covering Ser83–Ser92 has biased composition (basic residues). A compositionally biased stretch (basic and acidic residues) spans Arg222–Asp259.

C-terminal fragments could be released during apoptosis via caspase-3-dependent cleavage.

The protein localises to the membrane. It is found in the nucleus. It localises to the cytoplasm. Functionally, plays a role in the regulation of the actin cytoskeleton through its interactions with actin capping protein (CP). This is Pleckstrin homology domain-containing family O member 1 (PLEKHO1) from Gallus gallus (Chicken).